We begin with the raw amino-acid sequence, 301 residues long: Probable cyclic nucleotide phosphodiesterase RER_40650 (301 aa).

Asp-20, His-22, Asp-61, Asn-95, His-167, His-205, and His-207 together coordinate Fe cation. AMP is bound by residues His-22, Asp-61, and 95-96; that span reads NH. Residue His-207 coordinates AMP.

This sequence belongs to the cyclic nucleotide phosphodiesterase class-III family. The cofactor is Fe(2+).

This Rhodococcus erythropolis (strain PR4 / NBRC 100887) protein is Probable cyclic nucleotide phosphodiesterase RER_40650.